Reading from the N-terminus, the 227-residue chain is ATP-dependent dethiobiotin synthetase BioD (227 aa).

Residue 13 to 18 (DIGKTY) coordinates ATP. Thr17 contributes to the Mg(2+) binding site. The active site involves Lys38. Ser42 provides a ligand contact to substrate. Residues Asp55, 116–119 (EGSG), and 179–180 (NN) each bind ATP. Mg(2+) contacts are provided by Asp55 and Glu116.

This sequence belongs to the dethiobiotin synthetase family. In terms of assembly, homodimer. It depends on Mg(2+) as a cofactor.

The protein resides in the cytoplasm. It carries out the reaction (7R,8S)-7,8-diammoniononanoate + CO2 + ATP = (4R,5S)-dethiobiotin + ADP + phosphate + 3 H(+). It functions in the pathway cofactor biosynthesis; biotin biosynthesis; biotin from 7,8-diaminononanoate: step 1/2. Catalyzes a mechanistically unusual reaction, the ATP-dependent insertion of CO2 between the N7 and N8 nitrogen atoms of 7,8-diaminopelargonic acid (DAPA, also called 7,8-diammoniononanoate) to form a ureido ring. The sequence is that of ATP-dependent dethiobiotin synthetase BioD from Clostridium botulinum (strain Kyoto / Type A2).